Reading from the N-terminus, the 215-residue chain is Cytochrome b6 (215 aa).

A helical membrane pass occupies residues 32–52 (IFYCLGGITLTCFLIQFATGF). Cys-35 provides a ligand contact to heme c. Heme b-binding residues include His-86 and His-100. The next 3 membrane-spanning stretches (helical) occupy residues 90-110 (ASMM…TGGF), 116-136 (LTWV…VTGY), and 186-206 (AHTF…FLMI). Positions 187 and 202 each coordinate heme b.

The protein belongs to the cytochrome b family. PetB subfamily. The 4 large subunits of the cytochrome b6-f complex are cytochrome b6, subunit IV (17 kDa polypeptide, PetD), cytochrome f and the Rieske protein, while the 4 small subunits are PetG, PetL, PetM and PetN. The complex functions as a dimer. It depends on heme b as a cofactor. Heme c is required as a cofactor.

The protein localises to the cellular thylakoid membrane. Functionally, component of the cytochrome b6-f complex, which mediates electron transfer between photosystem II (PSII) and photosystem I (PSI), cyclic electron flow around PSI, and state transitions. This is Cytochrome b6 from Desmonostoc sp. (strain PCC 7906) (Nostoc sp. (strain PCC 7906)).